The chain runs to 235 residues: Orotidine 5'-phosphate decarboxylase (235 aa).

Substrate is bound by residues Asp17, Lys39, 66–75 (DLKLHDIGNT), Thr121, Arg182, Gln191, Gly211, and Arg212. Residue Lys68 is the Proton donor of the active site.

It belongs to the OMP decarboxylase family. Type 1 subfamily. As to quaternary structure, homodimer.

The enzyme catalyses orotidine 5'-phosphate + H(+) = UMP + CO2. The protein operates within pyrimidine metabolism; UMP biosynthesis via de novo pathway; UMP from orotate: step 2/2. In terms of biological role, catalyzes the decarboxylation of orotidine 5'-monophosphate (OMP) to uridine 5'-monophosphate (UMP). This Afipia carboxidovorans (strain ATCC 49405 / DSM 1227 / KCTC 32145 / OM5) (Oligotropha carboxidovorans) protein is Orotidine 5'-phosphate decarboxylase.